The following is a 374-amino-acid chain: MALPTPSDSTLPAEARGRGRRRRLVWTPSQSEALRACFERNPYPGIATRERLAQAIGIPEPRVQIWFQNERSRQLRQHRRESRPWPGRRGPPEGRRKRTAVTGSQTALLLRAFEKDRFPGIAAREELARETGLPESRIQIWFQNRRARHPGQGGRAPAQAGGLCSAAPGGGHPAPSWVAFAHTGAWGTGLPAPHVPCAPGALPQGAFVSQAARAAPALQPSQAAPAEGISQPAPARGDFAYAAPAPPDGALSHPQAPRWPPHPGKSREDRDPQRDGLPGPCAVAQPGPAQAGPQGQGVLAPPTSQGSPWWGWGRGPQVAGAAWEPQAGAAPPPQPAPPDASAASTDASHPGASQPLQEPGRSSTVTSSLLYELL.

Positions methionine 1–threonine 10 are enriched in polar residues. Disordered regions lie at residues methionine 1–leucine 24, serine 72–threonine 102, and leucine 218–leucine 374. 2 DNA-binding regions (homeobox) span residues glycine 19–histidine 78 and glycine 94–glycine 153. The span at lysine 265 to arginine 274 shows a compositional bias: basic and acidic residues. Composition is skewed to low complexity over residues proline 278–proline 302 and alanine 319–alanine 329. Over residues glutamine 354–leucine 374 the composition is skewed to polar residues.

In terms of assembly, may interact with MYF5; regulates MYF5 expression. As to expression, expressed in muscles, as well as in primary myoblasts and myotubes (at protein level).

The protein resides in the nucleus. The protein localises to the cytoplasm. In terms of biological role, down-regulates MYOD1 expression and may up-regulate MYF5 expression. May regulate microRNA (miRNA) transcription, up-regulating the expression of some myogenic miRNAs, including MIR1-1, MIR133A2, MIR133B and MIR206. Impairs the differentiation of myoblasts and may be involved in muscle regeneration. Reduces DUX4-induced nuclear localization of CTNNB1/beta-catenin and its subsequent activation of target genes. The protein is Double homeobox protein 4C (DUX4L9) of Homo sapiens (Human).